The primary structure comprises 429 residues: 3-phosphoshikimate 1-carboxyvinyltransferase (429 aa).

The 3-phosphoshikimate site is built by Lys20, Ser21, and Arg25. A phosphoenolpyruvate-binding site is contributed by Lys20. Phosphoenolpyruvate contacts are provided by Gly89 and Arg118. 3-phosphoshikimate-binding residues include Ser164, Ser165, Gln166, Ser192, Asp311, and Lys338. Gln166 contributes to the phosphoenolpyruvate binding site. Asp311 functions as the Proton acceptor in the catalytic mechanism. Residues Arg342 and Arg384 each contribute to the phosphoenolpyruvate site.

This sequence belongs to the EPSP synthase family. As to quaternary structure, monomer.

Its subcellular location is the cytoplasm. It catalyses the reaction 3-phosphoshikimate + phosphoenolpyruvate = 5-O-(1-carboxyvinyl)-3-phosphoshikimate + phosphate. Its pathway is metabolic intermediate biosynthesis; chorismate biosynthesis. In terms of biological role, catalyzes the transfer of the enolpyruvyl moiety of phosphoenolpyruvate (PEP) to the 5-hydroxyl of shikimate-3-phosphate (S3P) to produce enolpyruvyl shikimate-3-phosphate and inorganic phosphate. In Methanococcus vannielii (strain ATCC 35089 / DSM 1224 / JCM 13029 / OCM 148 / SB), this protein is 3-phosphoshikimate 1-carboxyvinyltransferase.